The following is a 721-amino-acid chain: Penicillin-binding protein activator LpoA (721 aa).

An N-terminal signal peptide occupies residues 1 to 26 (MVPLTFLRTKASRSLPIMLAALIFAG). Cys-27 is lipidated: N-palmitoyl cysteine. Cys-27 carries the S-diacylglycerol cysteine lipid modification. The segment covering 316 to 330 (TSDLTSAQAPAQGTM) has biased composition (polar residues). Positions 316-393 (TSDLTSAQAP…PAAQPQAVAA (78 aa)) are disordered. Low complexity predominate over residues 331 to 393 (QNPVTAPTTP…PAAQPQAVAA (63 aa)).

The protein belongs to the LpoA family. Interacts with PBP1a.

Its subcellular location is the cell outer membrane. Its function is as follows. Regulator of peptidoglycan synthesis that is essential for the function of penicillin-binding protein 1A (PBP1a). This Enterobacter sp. (strain 638) protein is Penicillin-binding protein activator LpoA.